The primary structure comprises 353 residues: Histidinol-phosphate aminotransferase (353 aa).

N6-(pyridoxal phosphate)lysine is present on Lys-218.

The protein belongs to the class-II pyridoxal-phosphate-dependent aminotransferase family. Histidinol-phosphate aminotransferase subfamily. Homodimer. Requires pyridoxal 5'-phosphate as cofactor.

It carries out the reaction L-histidinol phosphate + 2-oxoglutarate = 3-(imidazol-4-yl)-2-oxopropyl phosphate + L-glutamate. Its pathway is amino-acid biosynthesis; L-histidine biosynthesis; L-histidine from 5-phospho-alpha-D-ribose 1-diphosphate: step 7/9. The chain is Histidinol-phosphate aminotransferase from Synechococcus sp. (strain JA-2-3B'a(2-13)) (Cyanobacteria bacterium Yellowstone B-Prime).